A 195-amino-acid chain; its full sequence is CASP-like protein 1B1 (195 aa).

Residues 1-15 are Cytoplasmic-facing; the sequence is MAKLALAATSGKSCK. A helical membrane pass occupies residues 16 to 36; that stretch reads ILLGLRLLAFSATLSAAIVMG. Residues 37 to 67 lie on the Extracellular side of the membrane; sequence LNKETETFVVGKVGNTPIKATFTAKFDHTPA. The helical transmembrane segment at 68-88 threads the bilayer; that stretch reads FVFFVVANAMVSFHNLLMIAL. Residues 89-104 are Cytoplasmic-facing; it reads QIFGGKMEFTGFRLLS. Residues 105 to 125 form a helical membrane-spanning segment; the sequence is VAILDMLNVTLISAAANAAAF. Over 126–154 the chain is Extracellular; sequence MAEVGKNGNKHARWDKICDRFATYCDHGA. A helical membrane pass occupies residues 155 to 175; sequence GALIAAFAGVILMLIISAASI. The Cytoplasmic segment spans residues 176 to 195; the sequence is SRLAQQNKCCSTTASPSVVP.

Belongs to the Casparian strip membrane proteins (CASP) family. Homodimer and heterodimers.

The protein localises to the cell membrane. In Arabidopsis lyrata subsp. lyrata (Lyre-leaved rock-cress), this protein is CASP-like protein 1B1.